The following is a 207-amino-acid chain: Small ribosomal subunit protein uS4 (207 aa).

Positions 31–56 are disordered; it reads KCKLDSKPGQHGRTSGARTSDYGNQL. Positions 42–53 are enriched in polar residues; that stretch reads GRTSGARTSDYG. Residues 97–157 form the S4 RNA-binding domain; the sequence is TRLDNVVYRM…EKSKKQVRIV (61 aa).

This sequence belongs to the universal ribosomal protein uS4 family. As to quaternary structure, part of the 30S ribosomal subunit. Contacts protein S5. The interaction surface between S4 and S5 is involved in control of translational fidelity.

In terms of biological role, one of the primary rRNA binding proteins, it binds directly to 16S rRNA where it nucleates assembly of the body of the 30S subunit. With S5 and S12 plays an important role in translational accuracy. The chain is Small ribosomal subunit protein uS4 from Herminiimonas arsenicoxydans.